The sequence spans 69 residues: Microcin H47 immunity protein MchI (69 aa).

Residues 1-6 (MSYKKL) lie on the Cytoplasmic side of the membrane. The chain crosses the membrane as a helical span at residues 7 to 29 (YQLTAIFSLPLTILLVSLSSLRI). The Periplasmic portion of the chain corresponds to 30 to 38 (VGEGNSYVD). A helical transmembrane segment spans residues 39-61 (VFLSFIIFLGFIELIHGIRKILV). Residues 62–69 (WSGWKNGS) are Cytoplasmic-facing.

The protein localises to the cell membrane. Its function is as follows. Protects a microcin H47-producer cell against microcin H47. This Escherichia coli protein is Microcin H47 immunity protein MchI (mchI).